A 384-amino-acid chain; its full sequence is 5-cytosine rRNA methyltransferase NSUN4 (384 aa).

The transit peptide at 1 to 25 (MAALVVRGVRDMLKRADFATVPRRQ) directs the protein to the mitochondrion. 4 residues coordinate S-adenosyl-L-methionine: glycine 185, glycine 186, lysine 187, and aspartate 204. Serine 206 carries the post-translational modification Phosphoserine. S-adenosyl-L-methionine contacts are provided by arginine 209, aspartate 237, glycine 238, and aspartate 255. The active-site Nucleophile is the cysteine 310.

It belongs to the class I-like SAM-binding methyltransferase superfamily. RsmB/NOP family. As to quaternary structure, heterodimer with MTERFD2/MTERF4; this interaction seems to be required for NSUN4 recruitment to the mitochondrial large ribosomal subunit.

Its subcellular location is the mitochondrion. The enzyme catalyses a cytidine in rRNA + S-adenosyl-L-methionine = a 5-methylcytidine in rRNA + S-adenosyl-L-homocysteine + H(+). The catalysed reaction is a cytidine in mRNA + S-adenosyl-L-methionine = a 5-methylcytidine in mRNA + S-adenosyl-L-homocysteine + H(+). Its function is as follows. Mitochondrial RNA cytosine C(5)-methyltransferase that methylates cytosine to 5-methylcytosine (m5C) in various RNAs, such as rRNAs, mRNAs and some long non-coding RNAs (lncRNAs). Involved in mitochondrial ribosome small subunit (SSU) maturation by catalyzing methylation of mitochondrial 12S rRNA; the function is independent of MTERFD2/MTERF4 and assembled mitochondrial ribosome large subunit (LSU). Targeted to LSU by MTERFD2/MTERF4 and probably is involved in a final step in ribosome biogenesis to ensure that SSU and LSU are assembled. In vitro can methylate 16S rRNA of the LSU; the methylation is enhanced by MTERFD/MTERF4. Also acts as a regulator of innate immunity by marking double-stranded mitochondrial RNAs(mt-dsRNAs) generated in response to stress: catalyzes m5C modification on mitochondrial RNAs, such as a mRNAs and lncRNAs, with a preference for the termini of light-strand lncRNAs, promoting their degradation and cytosolic release. Modified light-strand lncRNAs are then recognized by C1QBP reader and recruited to the mitochondrial degradosome complex, which promotes their degradation. This chain is 5-cytosine rRNA methyltransferase NSUN4 (NSUN4), found in Bos taurus (Bovine).